A 279-amino-acid polypeptide reads, in one-letter code: GDT1-like protein 3 (279 aa).

Residues 1 to 23 form the signal peptide; the sequence is MDPNPRLLILLVLLAFSATVAVA. Transmembrane regions (helical) follow at residues 64 to 84, 103 to 123, 135 to 155, 186 to 206, 224 to 244, and 258 to 278; these read VGPG…VSEI, IVLS…TGLG, TNSA…YIAW, FFGR…FLAE, AIGV…LAVI, and VATI…FYPP.

The protein belongs to the GDT1 family.

The protein resides in the membrane. The chain is GDT1-like protein 3 from Oryza sativa subsp. japonica (Rice).